A 1638-amino-acid polypeptide reads, in one-letter code: Ciliary rootlet coiled-coil protein 2 (1638 aa).

Over residues 1–20 (MSSTSSNPDDGDTTEQSQLG) the composition is skewed to polar residues. 4 disordered regions span residues 1-21 (MSST…QLGL), 39-92 (REDR…REES), 396-423 (ARLR…TSLH), and 1168-1213 (TRRK…NLQE). Over residues 67–82 (SSSLGEEPLSGLREPP) the composition is skewed to low complexity. A coiled-coil region spans residues 85 to 144 (TSHAREESELLQEELTRLEDLLAQADAEREELASRCHMVSQRLQARLDTTEARLRKSELE). The span at 406-421 (SPHQRMSPARTSSPTS) shows a compositional bias: polar residues. Coiled coils occupy residues 426–1234 (LQAV…VQKE) and 1281–1315 (LQEA…AEGA). Residues 1180 to 1193 (RTLEAENQRKRQEV) are compositionally biased toward basic and acidic residues. 2 disordered regions span residues 1338 to 1383 (RNLL…VPVD) and 1506 to 1551 (ALEE…QTTS). Over residues 1349 to 1371 (SPTTGSSQTRPGRQRTSPPTRSY) the composition is skewed to polar residues. 2 coiled-coil regions span residues 1412–1506 (RDNS…LRQA) and 1542–1576 (RRAL…TEQE).

The protein belongs to the rootletin family.

This Mus musculus (Mouse) protein is Ciliary rootlet coiled-coil protein 2.